We begin with the raw amino-acid sequence, 274 residues long: Formamidopyrimidine-DNA glycosylase (274 aa).

The active-site Schiff-base intermediate with DNA is Pro2. Glu3 (proton donor) is an active-site residue. The active-site Proton donor; for beta-elimination activity is the Lys57. 3 residues coordinate DNA: His92, Arg111, and Lys152. The segment at 237-271 (QVYGRKGEECRECGTLIQAKVIGQRNSYFCPDCQP) adopts an FPG-type zinc-finger fold. Arg261 functions as the Proton donor; for delta-elimination activity in the catalytic mechanism.

The protein belongs to the FPG family. Monomer. Zn(2+) is required as a cofactor.

It carries out the reaction Hydrolysis of DNA containing ring-opened 7-methylguanine residues, releasing 2,6-diamino-4-hydroxy-5-(N-methyl)formamidopyrimidine.. It catalyses the reaction 2'-deoxyribonucleotide-(2'-deoxyribose 5'-phosphate)-2'-deoxyribonucleotide-DNA = a 3'-end 2'-deoxyribonucleotide-(2,3-dehydro-2,3-deoxyribose 5'-phosphate)-DNA + a 5'-end 5'-phospho-2'-deoxyribonucleoside-DNA + H(+). Its function is as follows. Involved in base excision repair of DNA damaged by oxidation or by mutagenic agents. Acts as a DNA glycosylase that recognizes and removes damaged bases. Has a preference for oxidized purines, such as 7,8-dihydro-8-oxoguanine (8-oxoG). Has AP (apurinic/apyrimidinic) lyase activity and introduces nicks in the DNA strand. Cleaves the DNA backbone by beta-delta elimination to generate a single-strand break at the site of the removed base with both 3'- and 5'-phosphates. This chain is Formamidopyrimidine-DNA glycosylase, found in Haemophilus ducreyi (strain 35000HP / ATCC 700724).